Here is a 569-residue protein sequence, read N- to C-terminus: Potassium-transporting ATPase potassium-binding subunit (569 aa).

10 consecutive transmembrane segments (helical) span residues L3–L23, A68–L88, V136–V156, V179–V199, L259–V279, H284–Y304, G384–G404, A422–V442, L490–G510, and L534–L554.

The protein belongs to the KdpA family. As to quaternary structure, the system is composed of three essential subunits: KdpA, KdpB and KdpC.

It is found in the cell inner membrane. Its function is as follows. Part of the high-affinity ATP-driven potassium transport (or Kdp) system, which catalyzes the hydrolysis of ATP coupled with the electrogenic transport of potassium into the cytoplasm. This subunit binds the periplasmic potassium ions and delivers the ions to the membrane domain of KdpB through an intramembrane tunnel. The protein is Potassium-transporting ATPase potassium-binding subunit of Nitratidesulfovibrio vulgaris (strain DP4) (Desulfovibrio vulgaris).